The chain runs to 63 residues: Putative antitoxin AF_1084 (63 aa).

The protein belongs to the UPF0165 family.

Its function is as follows. Possibly the antitoxin component of a type II toxin-antitoxin (TA) system. This Archaeoglobus fulgidus (strain ATCC 49558 / DSM 4304 / JCM 9628 / NBRC 100126 / VC-16) protein is Putative antitoxin AF_1084.